Consider the following 870-residue polypeptide: Protein RRP6-like 2 (870 aa).

One can recognise a 3'-5' exonuclease domain in the interval 263-428 (VQEVKDLKEL…YIYDLIKLEL (166 aa)). The region spanning 479-559 (NAAQLAIVAG…RQSMQHYAAF (81 aa)) is the HRDC domain. 4 disordered regions span residues 583 to 605 (SEKK…SSQL), 649 to 668 (GALL…EKVK), 688 to 775 (TEKV…EDEP), and 821 to 870 (FGEG…SFKN). 2 stretches are compositionally biased toward basic and acidic residues: residues 720–729 (SKEDGVKELK) and 821–834 (FGEG…KREA). A compositionally biased stretch (polar residues) spans 840-849 (KGSTQEQSEF).

The protein resides in the nucleus. Its subcellular location is the nucleolus. It is found in the cytoplasm. Functionally, acts as an important epigenetic regulator through multiple silencing mechanisms. Involved in association with RRP6L1 in the silencing of the solo LTR locus. Controls levels of non-coding RNAs (ncRNAs) from the solo LTR locus. Seems to function independently of the RNA-mediated gene silencing (RdDM) pathway. Functions redundantly with RRP6L1 in the regulation of FLC locus. Participates in the maintenance of trimethylated 'Lys-27' (H3K27me3) at FLC locus via the regulation of antisense long non-coding RNAs (lncRNAs) and the regulation of diverse antisense RNAs derived from the FLC locus. Seems not involved in the exosomal RNA degradation. May be involved in poly(A)-mediated RNA degradation. This chain is Protein RRP6-like 2, found in Arabidopsis thaliana (Mouse-ear cress).